We begin with the raw amino-acid sequence, 186 residues long: Superoxide dismutase [Cu-Zn] (186 aa).

An N-terminal signal peptide occupies residues 1–22 (MNMKTLLALAVSAVCSVSVAQA). Cu cation is bound by residues His79, His81, and His104. Cys86 and Cys182 form a disulfide bridge. The Zn(2+) site is built by His104, His113, His122, and Asp125. Cu cation is bound at residue His160.

Belongs to the Cu-Zn superoxide dismutase family. In terms of assembly, homodimer. The cofactor is Cu cation. It depends on Zn(2+) as a cofactor.

It localises to the periplasm. The catalysed reaction is 2 superoxide + 2 H(+) = H2O2 + O2. In terms of biological role, destroys radicals which are normally produced within the cells and which are toxic to biological systems. In Neisseria meningitidis serogroup A / serotype 4A (strain DSM 15465 / Z2491), this protein is Superoxide dismutase [Cu-Zn] (sodC).